The chain runs to 76 residues: Heat shock factor-binding protein 1 (76 aa).

It belongs to the HSBP1 family. As to quaternary structure, homohexamer. Associates with heptad repeats of HSF1 trimers and probably also HSF1 monomers, and with HSP70. Association with HSF1 trimers and HSP70 coincides with attenuation of heat shock response and the conversion of HSF1 trimer to monomer.

It is found in the nucleus. In terms of biological role, negative regulator of the heat shock response. Negatively affects HSF1 DNA-binding activity. May have a role in the suppression of the activation of the stress response during the aging process. The sequence is that of Heat shock factor-binding protein 1 (Hsbp1) from Mus musculus (Mouse).